We begin with the raw amino-acid sequence, 597 residues long: Zinc finger CCCH domain-containing protein 29 (597 aa).

ANK repeat units follow at residues glutamate 76–arginine 106 and glutamate 111–cysteine 143. 2 C3H1-type zinc fingers span residues proline 254–phenylalanine 281 and glutamine 289–aspartate 313. Positions alanine 320–glutamate 337 are enriched in polar residues. The segment at alanine 320–methionine 341 is disordered.

In terms of tissue distribution, expressed in roots and anthers.

The protein resides in the nucleus. In terms of biological role, involved in salt stress response. May positively modulate plant tolerance to salt stress. This chain is Zinc finger CCCH domain-containing protein 29, found in Arabidopsis thaliana (Mouse-ear cress).